Reading from the N-terminus, the 261-residue chain is Transmembrane protein 106A (261 aa).

Residues 1-10 (MGKAFSQLTS) are compositionally biased toward polar residues. The tract at residues 1 to 22 (MGKAFSQLTSQKDEDKSILPDN) is disordered. The chain crosses the membrane as a helical span at residues 93 to 113 (LSVFLAVTICLLIFSLTIFFL).

This sequence belongs to the TMEM106 family.

It is found in the cell membrane. Functionally, activates macrophages and polarizes them into M1-like macrophages through the activation of the MAPK and NF-kappaB signaling pathway. Upon activation, up-regulates the expression of CD80, CD86, CD69 and MHC II on macrophages, and induces the release of pro-inflammatory cytokines such as TNF, IL1B, IL6, CCL2 and nitric oxide. May play a role in inhibition of proliferation and migration. This is Transmembrane protein 106A (Tmem106a) from Rattus norvegicus (Rat).